The following is a 639-amino-acid chain: 1-deoxy-D-xylulose-5-phosphate synthase (639 aa).

Thiamine diphosphate is bound by residues H79 and 120-122 (GHS). Residue D151 coordinates Mg(2+). Thiamine diphosphate contacts are provided by residues 152–153 (GG), N180, Y288, and E370. Mg(2+) is bound at residue N180.

The protein belongs to the transketolase family. DXPS subfamily. In terms of assembly, homodimer. Mg(2+) is required as a cofactor. The cofactor is thiamine diphosphate.

The enzyme catalyses D-glyceraldehyde 3-phosphate + pyruvate + H(+) = 1-deoxy-D-xylulose 5-phosphate + CO2. Its pathway is metabolic intermediate biosynthesis; 1-deoxy-D-xylulose 5-phosphate biosynthesis; 1-deoxy-D-xylulose 5-phosphate from D-glyceraldehyde 3-phosphate and pyruvate: step 1/1. Catalyzes the acyloin condensation reaction between C atoms 2 and 3 of pyruvate and glyceraldehyde 3-phosphate to yield 1-deoxy-D-xylulose-5-phosphate (DXP). The chain is 1-deoxy-D-xylulose-5-phosphate synthase from Methylococcus capsulatus (strain ATCC 33009 / NCIMB 11132 / Bath).